The chain runs to 80 residues: Cell division protein ZapB (80 aa).

Residues 3 to 80 (FEVFEKLESK…ALLGKMEDVQ (78 aa)) are a coiled coil.

It belongs to the ZapB family. As to quaternary structure, homodimer. The ends of the coiled-coil dimer bind to each other, forming polymers. Interacts with FtsZ.

The protein localises to the cytoplasm. In terms of biological role, non-essential, abundant cell division factor that is required for proper Z-ring formation. It is recruited early to the divisome by direct interaction with FtsZ, stimulating Z-ring assembly and thereby promoting cell division earlier in the cell cycle. Its recruitment to the Z-ring requires functional FtsA or ZipA. In Proteus mirabilis (strain HI4320), this protein is Cell division protein ZapB.